Here is a 961-residue protein sequence, read N- to C-terminus: Probable exosome complex exonuclease RRP44 (961 aa).

Positions His-73–Arg-188 constitute a PINc domain. The region spanning Ile-232–Glu-338 is the CSD1 domain. The segment at Ala-322 to Lys-346 is disordered. A compositionally biased stretch (acidic residues) spans Met-325–Asp-337. The CSD2 domain maps to Leu-381–Asp-447. Residues Arg-479–Ile-809 enclose the RNB domain.

The protein belongs to the RNR ribonuclease family. In terms of assembly, component of the RNA exosome complex. Ubiquitously expressed.

It is found in the nucleus. Its subcellular location is the nucleoplasm. In terms of biological role, putative catalytic component of the RNA exosome complex which has 3'-&gt;5' exoribonuclease activity and participates in a multitude of cellular RNA processing and degradation events. Has both 3'-5' exonuclease and endonuclease activities. Involved in regulation of antisense ribosomal siRNA production. The chain is Probable exosome complex exonuclease RRP44 (dis-3) from Caenorhabditis elegans.